A 429-amino-acid chain; its full sequence is Adenylosuccinate synthetase (429 aa).

Residues 11-17 (GDEGKGK) and 39-41 (GHT) contribute to the GTP site. Aspartate 12 serves as the catalytic Proton acceptor. Residues aspartate 12 and glycine 39 each coordinate Mg(2+). IMP-binding positions include 12–15 (DEGK), 37–40 (NAGH), threonine 130, arginine 144, asparagine 226, threonine 241, and arginine 305. Residue histidine 40 is the Proton donor of the active site. 301–307 (VTTGRRR) is a substrate binding site. GTP is bound by residues arginine 307, 333–335 (KLD), and 415–417 (GVG).

Belongs to the adenylosuccinate synthetase family. In terms of assembly, homodimer. Mg(2+) is required as a cofactor.

It is found in the cytoplasm. It carries out the reaction IMP + L-aspartate + GTP = N(6)-(1,2-dicarboxyethyl)-AMP + GDP + phosphate + 2 H(+). It participates in purine metabolism; AMP biosynthesis via de novo pathway; AMP from IMP: step 1/2. In terms of biological role, plays an important role in the de novo pathway and in the salvage pathway of purine nucleotide biosynthesis. Catalyzes the first committed step in the biosynthesis of AMP from IMP. This is Adenylosuccinate synthetase from Yarrowia lipolytica (strain CLIB 122 / E 150) (Yeast).